Reading from the N-terminus, the 126-residue chain is Fatty acid-binding protein, liver (126 aa).

Alanine 2 bears the N-acetylalanine mark. Residues arginine 56, glutamine 57, lysine 77, histidine 99, and glutamine 101 each contribute to the cholate site.

Belongs to the calycin superfamily. Fatty-acid binding protein (FABP) family.

The protein localises to the cytoplasm. In terms of biological role, binds free fatty acids and their coenzyme A derivatives, bilirubin, and some other small molecules in the cytoplasm. May be involved in intracellular lipid transport. Binds 2 molecules of cholate per subunit. This Gallus gallus (Chicken) protein is Fatty acid-binding protein, liver (FABP1).